The following is a 188-amino-acid chain: GMP synthase [glutamine-hydrolyzing] subunit A (188 aa).

The 188-residue stretch at 1–188 (MIIIMDNGGQ…RNFAKICGEL (188 aa)) folds into the Glutamine amidotransferase type-1 domain. The Nucleophile role is filled by C78. Active-site residues include H165 and E167.

As to quaternary structure, heterodimer composed of a glutamine amidotransferase subunit (A) and a GMP-binding subunit (B).

It carries out the reaction XMP + L-glutamine + ATP + H2O = GMP + L-glutamate + AMP + diphosphate + 2 H(+). Its pathway is purine metabolism; GMP biosynthesis; GMP from XMP (L-Gln route): step 1/1. In terms of biological role, catalyzes the synthesis of GMP from XMP. In Pyrococcus furiosus (strain ATCC 43587 / DSM 3638 / JCM 8422 / Vc1), this protein is GMP synthase [glutamine-hydrolyzing] subunit A.